Reading from the N-terminus, the 261-residue chain is Succinate dehydrogenase iron-sulfur subunit (261 aa).

The segment at 1–23 (MAELRLPPNSVVKKGKEHKEQEE) is disordered. Positions 28–119 (RKVKIYRYDP…DIKIYPLPHM (92 aa)) constitute a 2Fe-2S ferredoxin-type domain. Cys-80, Cys-85, and Cys-100 together coordinate [2Fe-2S] cluster. The 4Fe-4S ferredoxin-type domain occupies 161–191 (GREKLDGLYECILCACCSTSCPSYWWNGDKY). Cys-171, Cys-174, and Cys-177 together coordinate [4Fe-4S] cluster. Cys-181 contacts [3Fe-4S] cluster. Trp-186 contributes to the a ubiquinone binding site. Positions 228 and 234 each coordinate [3Fe-4S] cluster. Cys-238 is a binding site for [4Fe-4S] cluster.

This sequence belongs to the succinate dehydrogenase/fumarate reductase iron-sulfur protein family. As to quaternary structure, part of an enzyme complex containing four subunits: a flavoprotein, an iron-sulfur, cytochrome b-556, and a hydrophobic anchor protein. [2Fe-2S] cluster is required as a cofactor. [3Fe-4S] cluster serves as cofactor. Requires [4Fe-4S] cluster as cofactor.

The enzyme catalyses a quinone + succinate = fumarate + a quinol. Its pathway is carbohydrate metabolism; tricarboxylic acid cycle; fumarate from succinate (bacterial route): step 1/1. The chain is Succinate dehydrogenase iron-sulfur subunit (sdhB) from Rickettsia felis (strain ATCC VR-1525 / URRWXCal2) (Rickettsia azadi).